The primary structure comprises 710 residues: Adenylosuccinate synthetase (710 aa).

2 disordered regions span residues 1–53 (MPVR…PQEA) and 84–110 (DEPPHGSQKPLSVAPYTANASNSSGRS). 2 stretches are compositionally biased toward polar residues: residues 10–27 (YNNSSPGVSNALSPSTTA) and 101–110 (ANASNSSGRS). Residues 180 to 186 (GDEGKGK) and 210 to 212 (GHT) contribute to the GTP site. Asp181 acts as the Proton acceptor in catalysis. Mg(2+) contacts are provided by Asp181 and Gly210. IMP is bound by residues 181–184 (DEGK), 208–211 (NAGH), Thr295, Lys309, Gln421, Thr437, and Lys567. His211 serves as the catalytic Proton donor. A substrate-binding site is contributed by 563 to 569 (AVTKKPR). GTP-binding positions include Arg569 and 697 to 699 (GNG).

This sequence belongs to the adenylosuccinate synthetase family. As to quaternary structure, homodimer. Mg(2+) serves as cofactor.

It is found in the cytoplasm. It carries out the reaction IMP + L-aspartate + GTP = N(6)-(1,2-dicarboxyethyl)-AMP + GDP + phosphate + 2 H(+). The protein operates within purine metabolism; AMP biosynthesis via de novo pathway; AMP from IMP: step 1/2. Its function is as follows. Plays an important role in the salvage pathway for purine nucleotide biosynthesis. Catalyzes the first committed step in the biosynthesis of AMP from IMP. The protein is Adenylosuccinate synthetase (ADSS) of Leishmania donovani.